The sequence spans 398 residues: Calcium-binding and coiled-coil domain-containing protein 2 (398 aa).

Positions 133–136 (ILVV) match the CLIR motif. Residues 137-301 (TTQGEVEEIE…RENSRLLSYM (165 aa)) are a coiled coil. An LIR-like motif is present at residues 203-206 (DYWE). Positions 314-341 (TSDEGGAGQNPGLVYGNPYSGIQESSSP) are disordered. Positions 323 to 333 (NPGLVYGNPYS) are interaction with LGALS8. An interaction with MYO6 region spans residues 347 to 398 (KKCPICKADDICDHTLEQQQMQALCLNCPICDKIFPATEKQIFEDHVFCHSL). The segment at 371–396 (CLNCPICDKIFPATEKQIFEDHVFCH) adopts a UBZ1-type zinc-finger fold. 4 residues coordinate Zn(2+): Cys374, Cys377, His392, and His396. Position 397 is a phosphoserine (Ser397).

The protein belongs to the CALCOCO family. As to quaternary structure, dimer. Part of a complex consisting of CALCOCO2, TAX1BP1 and MYO6. Interacts with MYO6. Interacts with GEMIN4. Interacts with ATG8 family members MAP1LC3A, MAP1LC3B, GABARAP, GABARAPL1 and GABARAPL2. Interacts with ATG8 family member MAP1LC3C. Interacts with LGALS8. Interacts with TOM1; the interaction is indirect and is mediated by MYO6, which acts as a bridge between TOM1 and CALCOCO2. Interacts with AZI2.

Its subcellular location is the cytoplasm. The protein localises to the perinuclear region. It localises to the cytoskeleton. It is found in the cytoplasmic vesicle. The protein resides in the autophagosome membrane. Its function is as follows. Xenophagy-specific receptor required for autophagy-mediated intracellular bacteria degradation. Acts as an effector protein of galectin-sensed membrane damage that restricts the proliferation of infecting pathogens upon entry into the cytosol by targeting LGALS8-associated bacteria for autophagy. Initially orchestrates bacteria targeting to autophagosomes and subsequently ensures pathogen degradation by regulating pathogen-containing autophagosome maturation. Bacteria targeting to autophagosomes relies on its interaction with MAP1LC3A, MAP1LC3B and/or GABARAPL2, whereas regulation of pathogen-containing autophagosome maturation requires the interaction with MAP3LC3C. May play a role in ruffle formation and actin cytoskeleton organization and seems to negatively regulate constitutive secretion. This is Calcium-binding and coiled-coil domain-containing protein 2 from Macaca fascicularis (Crab-eating macaque).